Here is a 302-residue protein sequence, read N- to C-terminus: Acetaldehyde dehydrogenase 2 (302 aa).

Cys-130 serves as the catalytic Acyl-thioester intermediate. NAD(+)-binding positions include 161-169 (SVGPGTRRN) and Asn-272.

The protein belongs to the acetaldehyde dehydrogenase family.

It carries out the reaction acetaldehyde + NAD(+) + CoA = acetyl-CoA + NADH + H(+). The protein is Acetaldehyde dehydrogenase 2 of Cupriavidus necator (strain ATCC 17699 / DSM 428 / KCTC 22496 / NCIMB 10442 / H16 / Stanier 337) (Ralstonia eutropha).